Consider the following 177-residue polypeptide: Ribosome rescue factor SmrB (177 aa).

Residues 92–167 form the Smr domain; the sequence is LDLHGLTRQK…GDAAILVLIE (76 aa).

This sequence belongs to the SmrB family. In terms of assembly, associates with collided ribosomes, but not with correctly translating polysomes.

Functionally, acts as a ribosome collision sensor. Detects stalled/collided disomes (pairs of ribosomes where the leading ribosome is stalled and a second ribosome has collided with it) and endonucleolytically cleaves mRNA at the 5' boundary of the stalled ribosome. Stalled/collided disomes form a new interface (primarily via the 30S subunits) that binds SmrB. Cleaved mRNA becomes available for tmRNA ligation, leading to ribosomal subunit dissociation and rescue of stalled ribosomes. The protein is Ribosome rescue factor SmrB of Haemophilus ducreyi (strain 35000HP / ATCC 700724).